The chain runs to 276 residues: NH(3)-dependent NAD(+) synthetase (276 aa).

43–50 serves as a coordination point for ATP; it reads GISGGVDS. Asp49 lines the Mg(2+) pocket. A deamido-NAD(+)-binding site is contributed by Arg146. Thr166 provides a ligand contact to ATP. Glu171 contacts Mg(2+). Positions 179 and 186 each coordinate deamido-NAD(+). Lys195 and Thr217 together coordinate ATP. Deamido-NAD(+) is bound at residue 266–267; the sequence is HK.

This sequence belongs to the NAD synthetase family. As to quaternary structure, homodimer.

It carries out the reaction deamido-NAD(+) + NH4(+) + ATP = AMP + diphosphate + NAD(+) + H(+). Its pathway is cofactor biosynthesis; NAD(+) biosynthesis; NAD(+) from deamido-NAD(+) (ammonia route): step 1/1. Catalyzes the ATP-dependent amidation of deamido-NAD to form NAD. Uses ammonia as a nitrogen source. In Shewanella baltica (strain OS223), this protein is NH(3)-dependent NAD(+) synthetase.